Reading from the N-terminus, the 498-residue chain is Lysine--tRNA ligase (498 aa).

Mg(2+) contacts are provided by Glu-407 and Glu-414.

The protein belongs to the class-II aminoacyl-tRNA synthetase family. Homodimer. Requires Mg(2+) as cofactor.

The protein localises to the cytoplasm. The enzyme catalyses tRNA(Lys) + L-lysine + ATP = L-lysyl-tRNA(Lys) + AMP + diphosphate. The protein is Lysine--tRNA ligase (lysS) of Rhizobium meliloti (strain 1021) (Ensifer meliloti).